Reading from the N-terminus, the 303-residue chain is D-alanine--D-alanine ligase (303 aa).

Residues T99–K293 form the ATP-grasp domain. G125–T176 provides a ligand contact to ATP. Mg(2+) contacts are provided by D248, E260, and N262.

This sequence belongs to the D-alanine--D-alanine ligase family. Mg(2+) serves as cofactor. Mn(2+) is required as a cofactor.

It is found in the cytoplasm. It carries out the reaction 2 D-alanine + ATP = D-alanyl-D-alanine + ADP + phosphate + H(+). Its pathway is cell wall biogenesis; peptidoglycan biosynthesis. In terms of biological role, cell wall formation. This Thermotoga maritima (strain ATCC 43589 / DSM 3109 / JCM 10099 / NBRC 100826 / MSB8) protein is D-alanine--D-alanine ligase.